The chain runs to 142 residues: MVQPAPLITNAPTPKIPNIPAVALNVAPCIMAPISIDQLQGKYNSHVPTGFSSLISSAYGIHFLGSRDTNGPSPSNLSFLATSNSFDVNTGADSFEEGEEEEEEEDVYLFLLLPMIPATVTRPLPRMDLPSKILFLCQINIS.

This is an uncharacterized protein from Saccharomyces cerevisiae (strain ATCC 204508 / S288c) (Baker's yeast).